The primary structure comprises 871 residues: Probable inorganic carbon transporter subunit DabA (871 aa).

Residues Cys-396, Asp-398, His-577, and Cys-592 each contribute to the Zn(2+) site.

Belongs to the inorganic carbon transporter (TC 9.A.2) DabA family. In terms of assembly, forms a complex with DabB. Requires Zn(2+) as cofactor.

The protein resides in the cell membrane. Its function is as follows. Part of an energy-coupled inorganic carbon pump. The polypeptide is Probable inorganic carbon transporter subunit DabA (Bacillus subtilis (strain 168)).